We begin with the raw amino-acid sequence, 192 residues long: Lipid A acyltransferase PagP (192 aa).

Positions 1 to 26 (MTVVNKSFLTILIFFCQILFPLNASA) are cleaved as a signal peptide. Active-site residues include His64, Asp107, and Ser108.

Belongs to the lipid A palmitoyltransferase family. Homodimer.

Its subcellular location is the cell outer membrane. The catalysed reaction is a lipid A + a 1,2-diacyl-sn-glycero-3-phosphocholine = a hepta-acyl lipid A + a 2-acyl-sn-glycero-3-phosphocholine. It carries out the reaction a lipid IVA + a 1,2-diacyl-sn-glycero-3-phosphocholine = a lipid IVB + a 2-acyl-sn-glycero-3-phosphocholine. It catalyses the reaction a lipid IIA + a 1,2-diacyl-sn-glycero-3-phosphocholine = a lipid IIB + a 2-acyl-sn-glycero-3-phosphocholine. Transfers a fatty acid residue from the sn-1 position of a phospholipid to the N-linked hydroxyfatty acid chain on the proximal unit of lipid A or its precursors. This Cronobacter sakazakii (strain ATCC BAA-894) (Enterobacter sakazakii) protein is Lipid A acyltransferase PagP.